Here is a 226-residue protein sequence, read N- to C-terminus: Ribonuclease 3 (226 aa).

In terms of domain architecture, RNase III spans 7–129 (LPRLCRTLGY…IIGAIYLDSD (123 aa)). Residue Glu-42 participates in Mg(2+) binding. Asp-46 is an active-site residue. Mg(2+) contacts are provided by Asp-115 and Glu-118. Residue Glu-118 is part of the active site. In terms of domain architecture, DRBM spans 156-226 (DAKTLLQEYL…AAQVLELLKK (71 aa)).

This sequence belongs to the ribonuclease III family. Homodimer. Requires Mg(2+) as cofactor.

The protein localises to the cytoplasm. The enzyme catalyses Endonucleolytic cleavage to 5'-phosphomonoester.. Digests double-stranded RNA. Involved in the processing of primary rRNA transcript to yield the immediate precursors to the large and small rRNAs (23S and 16S). Processes some mRNAs, and tRNAs when they are encoded in the rRNA operon. Processes pre-crRNA and tracrRNA of type II CRISPR loci if present in the organism. This is Ribonuclease 3 from Shewanella sp. (strain W3-18-1).